A 227-amino-acid chain; its full sequence is LexA repressor (227 aa).

Residues 26–46 constitute a DNA-binding region (H-T-H motif); that stretch reads FDEMKEALDLASKSGIHRLIT. Catalysis depends on for autocatalytic cleavage activity residues serine 147 and lysine 185.

The protein belongs to the peptidase S24 family. Homodimer.

The catalysed reaction is Hydrolysis of Ala-|-Gly bond in repressor LexA.. In terms of biological role, represses a number of genes involved in the response to DNA damage (SOS response), including recA and lexA. In the presence of single-stranded DNA, RecA interacts with LexA causing an autocatalytic cleavage which disrupts the DNA-binding part of LexA, leading to derepression of the SOS regulon and eventually DNA repair. The polypeptide is LexA repressor (Hyphomonas neptunium (strain ATCC 15444)).